The primary structure comprises 500 residues: MAMMAMGAASWAPIPAPARAAAAFYPGRDLAAARRRRGAAARRPFVFTPRAVSDSRSSQTCLDPDASTSVLGIILGGGAGTRLYPLTKKRAKPAVPLGANYRLIDIPVSNCLNSNVSKIYVLTQFNSASLNRHLSRAYGNNIGGYKNEGFVEVLAAQQSPENPNWFQGTADAVRQYLWLFEEHNVMEFLILAGDHLYRMDYQKFIQAHRETNADITVAALPMDEERATAFGLMKIDDEGRIIEFAEKPKGEKLKSMMVDTTILGLDTERAKELPYIASMGIYVFSKDVMLKLLRQNFPAANDFGSEVIPGATEIGMRVQAYLYDGYWEDIGTIEAFYNANLGITKKPVPDFSFYDRSAAIYTQPRYLPPSKVLDADVTDSVIGEGCVIRHCTINHSVVGLRSCISEGAVIEDSLLMGADYYETETDKKALSETGGIPIGIGKNAHIRKAIIDKNARIGENVKIINVDNIQEASRETDGYFIKSGIVTVIKDALIPSGTVI.

The transit peptide at 1–50 directs the protein to the chloroplast; that stretch reads MAMMAMGAASWAPIPAPARAAAAFYPGRDLAAARRRRGAAARRPFVFTPR.

The protein belongs to the bacterial/plant glucose-1-phosphate adenylyltransferase family. In terms of assembly, heterotetramer composed of two small and two large subunits. In terms of tissue distribution, expressed in leaves.

The protein localises to the plastid. Its subcellular location is the chloroplast. The protein resides in the amyloplast. The enzyme catalyses alpha-D-glucose 1-phosphate + ATP + H(+) = ADP-alpha-D-glucose + diphosphate. It participates in glycan biosynthesis; starch biosynthesis. Activated by 3'phosphoglycerate, inhibited by orthophosphate. Allosteric regulation. Involved in synthesis of starch. Catalyzes the synthesis of ADP-glucose, a molecule that serves as an activated glycosyl donor for alpha-1,4-glucan synthesis. Essential for starch synthesis in leaf chloroplasts and endosperm amyloplasts. The protein is Glucose-1-phosphate adenylyltransferase small subunit 1, chloroplastic/amyloplastic of Oryza sativa subsp. japonica (Rice).